The primary structure comprises 178 residues: C-phycoerythrin class 2 subunit beta (178 aa).

Residues Cys50 and Cys61 each coordinate phycourobilin. (2R,3E)-phycoerythrobilin-binding residues include Cys82 and Cys159.

It belongs to the phycobiliprotein family. In terms of assembly, heterodimer of an alpha and a beta chain. In terms of processing, contains two covalently linked phycoerythrobilin chromophores and one covalently linked phycourobilin chromophore.

It is found in the cellular thylakoid membrane. Light-harvesting photosynthetic bile pigment-protein from the phycobiliprotein complex. The sequence is that of C-phycoerythrin class 2 subunit beta (mpeB) from Synechococcus sp. (strain WH8020).